Here is a 32-residue protein sequence, read N- to C-terminus: Cytochrome b6-f complex subunit 7 (32 aa).

Residues 9 to 27 (AAVFWILIPIGLVGGALLL) form a helical membrane-spanning segment.

It belongs to the PetM family. As to quaternary structure, the 4 large subunits of the cytochrome b6-f complex are cytochrome b6, subunit IV (17 kDa polypeptide, PetD), cytochrome f and the Rieske protein, while the 4 small subunits are PetG, PetL, PetM and PetN. The complex functions as a dimer.

It is found in the cellular thylakoid membrane. In terms of biological role, component of the cytochrome b6-f complex, which mediates electron transfer between photosystem II (PSII) and photosystem I (PSI), cyclic electron flow around PSI, and state transitions. The protein is Cytochrome b6-f complex subunit 7 of Prochlorococcus marinus (strain MIT 9515).